Consider the following 343-residue polypeptide: Heat-inducible transcription repressor HrcA (343 aa).

This sequence belongs to the HrcA family.

Negative regulator of class I heat shock genes (grpE-dnaK-dnaJ and groELS operons). Prevents heat-shock induction of these operons. This is Heat-inducible transcription repressor HrcA from Mycobacterium tuberculosis (strain ATCC 25177 / H37Ra).